A 188-amino-acid polypeptide reads, in one-letter code: Protein GrpE (188 aa).

This sequence belongs to the GrpE family. As to quaternary structure, homodimer.

The protein resides in the cytoplasm. Functionally, participates actively in the response to hyperosmotic and heat shock by preventing the aggregation of stress-denatured proteins, in association with DnaK and GrpE. It is the nucleotide exchange factor for DnaK and may function as a thermosensor. Unfolded proteins bind initially to DnaJ; upon interaction with the DnaJ-bound protein, DnaK hydrolyzes its bound ATP, resulting in the formation of a stable complex. GrpE releases ADP from DnaK; ATP binding to DnaK triggers the release of the substrate protein, thus completing the reaction cycle. Several rounds of ATP-dependent interactions between DnaJ, DnaK and GrpE are required for fully efficient folding. In Chromobacterium violaceum (strain ATCC 12472 / DSM 30191 / JCM 1249 / CCUG 213 / NBRC 12614 / NCIMB 9131 / NCTC 9757 / MK), this protein is Protein GrpE.